Reading from the N-terminus, the 210-residue chain is Prohead protease (210 aa).

Positions 1 to 23 are excised as a propeptide; that stretch reads MTQAAIDYNKLKSAPVHLDAYIK. Catalysis depends on residues His76, Ser122, and Glu148. A propeptide spanning residues 167–210 is cleaved from the precursor; it reads SMNGHDYTEWRKSFTAISSKAVPAQERNLSELEKLAIALGYVKE.

Belongs to the HK97 prohead protease protein family. Post-translationally, cleaves itself autocatalytically to yield the mature form of the protease.

It localises to the virion. In terms of biological role, serine protease involved in capsid assembly and maturation. Cleaves the major capsid protein, the decoration protein, the portal protein to yield mature procapsids competent for DNA packaging. Acts as a trigger for assembly of the capsid protein. In Escherichia coli (Enterobacteria phage T5), this protein is Prohead protease.